Consider the following 367-residue polypeptide: Carbamoyl phosphate synthase small chain (367 aa).

The CPSase stretch occupies residues 1 to 182 (MKLENKKGYL…PIFHPNTGDM (182 aa)). S50, G230, and G232 together coordinate L-glutamine. One can recognise a Glutamine amidotransferase type-1 domain in the interval 182-367 (MIVVVDCGIK…DKFRTMVTGK (186 aa)). C258 acts as the Nucleophile in catalysis. Residues L259, Q262, N300, G302, and Y303 each coordinate L-glutamine. Catalysis depends on residues H343 and E345.

Belongs to the CarA family. In terms of assembly, composed of two chains; the small (or glutamine) chain promotes the hydrolysis of glutamine to ammonia, which is used by the large (or ammonia) chain to synthesize carbamoyl phosphate. Tetramer of heterodimers (alpha,beta)4.

The enzyme catalyses hydrogencarbonate + L-glutamine + 2 ATP + H2O = carbamoyl phosphate + L-glutamate + 2 ADP + phosphate + 2 H(+). The catalysed reaction is L-glutamine + H2O = L-glutamate + NH4(+). Its pathway is amino-acid biosynthesis; L-arginine biosynthesis; carbamoyl phosphate from bicarbonate: step 1/1. The protein operates within pyrimidine metabolism; UMP biosynthesis via de novo pathway; (S)-dihydroorotate from bicarbonate: step 1/3. Functionally, small subunit of the glutamine-dependent carbamoyl phosphate synthetase (CPSase). CPSase catalyzes the formation of carbamoyl phosphate from the ammonia moiety of glutamine, carbonate, and phosphate donated by ATP, constituting the first step of 2 biosynthetic pathways, one leading to arginine and/or urea and the other to pyrimidine nucleotides. The small subunit (glutamine amidotransferase) binds and cleaves glutamine to supply the large subunit with the substrate ammonia. The polypeptide is Carbamoyl phosphate synthase small chain (Saccharolobus solfataricus (strain ATCC 35092 / DSM 1617 / JCM 11322 / P2) (Sulfolobus solfataricus)).